The sequence spans 412 residues: Probable beta-1,4-xylosyltransferase IRX10 (412 aa).

The helical; Signal-anchor for type II membrane protein transmembrane segment at 1 to 21 (MKIHSCLSAILLFLFFSASSA) threads the bilayer. The Lumenal portion of the chain corresponds to 22 to 412 (KQNVRTERIS…AGPVADLKPW (391 aa)). N139 and N400 each carry an N-linked (GlcNAc...) asparagine glycan.

Belongs to the glycosyltransferase 47 family. Limited to xylem cells. Expressed in the root tip, xylem cells of roots, and in the vasculature of roots, cotyledons and leaves.

The protein localises to the golgi apparatus membrane. Its function is as follows. Involved in the synthesis of the hemicellulose glucuronoxylan, a major component of secondary cell walls. Probably involved in the elongation of glucuronoxylan xylosyl backbone, especially in the formation of GlcUA side chain of xylans. The chain is Probable beta-1,4-xylosyltransferase IRX10 (IRX10) from Arabidopsis thaliana (Mouse-ear cress).